The following is a 403-amino-acid chain: Argininosuccinate synthase (403 aa).

ATP is bound by residues 12–20 (AYSGGLDTS) and Ala-39. L-citrulline contacts are provided by Tyr-90 and Ser-95. Residue Gly-120 coordinates ATP. L-aspartate is bound by residues Thr-122, Asn-126, and Asp-127. Position 126 (Asn-126) interacts with L-citrulline. Positions 130, 182, 191, 267, and 279 each coordinate L-citrulline.

It belongs to the argininosuccinate synthase family. Type 1 subfamily. Homotetramer.

The protein localises to the cytoplasm. It catalyses the reaction L-citrulline + L-aspartate + ATP = 2-(N(omega)-L-arginino)succinate + AMP + diphosphate + H(+). It functions in the pathway amino-acid biosynthesis; L-arginine biosynthesis; L-arginine from L-ornithine and carbamoyl phosphate: step 2/3. This is Argininosuccinate synthase from Ruthia magnifica subsp. Calyptogena magnifica.